Reading from the N-terminus, the 317-residue chain is tRNA dimethylallyltransferase (317 aa).

Position 14 to 21 (14 to 21) interacts with ATP; the sequence is GPTASGKT. A substrate-binding site is contributed by 16 to 21; that stretch reads TASGKT. 2 interaction with substrate tRNA regions span residues 39–42 and 163–167; these read DSAL and QRIQR.

This sequence belongs to the IPP transferase family. Monomer. Mg(2+) is required as a cofactor.

It catalyses the reaction adenosine(37) in tRNA + dimethylallyl diphosphate = N(6)-dimethylallyladenosine(37) in tRNA + diphosphate. Functionally, catalyzes the transfer of a dimethylallyl group onto the adenine at position 37 in tRNAs that read codons beginning with uridine, leading to the formation of N6-(dimethylallyl)adenosine (i(6)A). The chain is tRNA dimethylallyltransferase from Stenotrophomonas maltophilia (strain K279a).